The primary structure comprises 744 residues: 3-isopropylmalate dehydratase (744 aa).

[4Fe-4S] cluster is bound by residues cysteine 341, cysteine 401, and cysteine 404.

The protein belongs to the aconitase/IPM isomerase family. As to quaternary structure, monomer. Requires [4Fe-4S] cluster as cofactor.

It catalyses the reaction (2R,3S)-3-isopropylmalate = (2S)-2-isopropylmalate. It participates in amino-acid biosynthesis; L-leucine biosynthesis; L-leucine from 3-methyl-2-oxobutanoate: step 2/4. Its function is as follows. Catalyzes the isomerization between 2-isopropylmalate and 3-isopropylmalate, via the formation of 2-isopropylmaleate. The sequence is that of 3-isopropylmalate dehydratase (leu1) from Phycomyces blakesleeanus (strain ATCC 8743b / DSM 1359 / FGSC 10004 / NBRC 33097 / NRRL 1555).